Consider the following 411-residue polypeptide: Replication factor C subunit 2 (411 aa).

Residues 1–36 (MADFFNLKARQQAAAQASSSKTPTSKQESNRLQPWV) form a disordered region. Over residues 11-27 (QQAAAQASSSKTPTSKQ) the composition is skewed to low complexity. ATP is bound by residues Val-36, Arg-40, 73-81 (GPPGTGKTS), Asn-195, and Arg-253.

The protein belongs to the activator 1 small subunits family. Heteropentamer of subunits RFC1, RFC2, RFC3, RFC4 and RFC5 that forms a complex with PCNA in the presence of ATP.

It is found in the nucleus. Functionally, the elongation of primed DNA templates by DNA polymerase delta and epsilon requires the action of the accessory proteins proliferating cell nuclear antigen (PCNA) and activator 1. Subunit 2 binds ATP and single-stranded DNA. The sequence is that of Replication factor C subunit 2 (RFC2) from Phaeosphaeria nodorum (strain SN15 / ATCC MYA-4574 / FGSC 10173) (Glume blotch fungus).